The sequence spans 420 residues: Glucose-1-phosphate adenylyltransferase (420 aa).

Residues Tyr-107, Gly-172, 187-188, and Ser-205 contribute to the alpha-D-glucose 1-phosphate site; that span reads EK.

The protein belongs to the bacterial/plant glucose-1-phosphate adenylyltransferase family. In terms of assembly, homotetramer.

The enzyme catalyses alpha-D-glucose 1-phosphate + ATP + H(+) = ADP-alpha-D-glucose + diphosphate. The protein operates within glycan biosynthesis; glycogen biosynthesis. Functionally, involved in the biosynthesis of ADP-glucose, a building block required for the elongation reactions to produce glycogen. Catalyzes the reaction between ATP and alpha-D-glucose 1-phosphate (G1P) to produce pyrophosphate and ADP-Glc. The polypeptide is Glucose-1-phosphate adenylyltransferase (Sinorhizobium fredii (strain NBRC 101917 / NGR234)).